Consider the following 951-residue polypeptide: MLLSETHFWTTLREDVVRIKSQDLGAFRYLRQRDKEQEQQDLACLAKRDYTERRNGLAVLKNSGRKSTGRLKDNLKKLEDLLRQHRIIHSEWQDAAQVLLLFSHGLIAHICVDIYTGDILRMVFEKYLVGKLASEVITDAFFTRSHIVLAYNTNQLTVVHLQRPNARSQGPEKIANMDPRIFHVIIPGATERKLSRHLTVNASFDLFVVWTQSSQNEVYPWRPTIRDQDRANIHVFKIKGLQLESIAYCWSENDPLCVDFLRSSESQIITLEQKVSRKGDISAEICSYELAAGKMQRTAITSIPMGAQICSFAFSPDQEKLFLGSVDRNICLHDLVQQSTKYANQIEIVPNQCAWHCDSAMLCVANERSVLQCFDLALATIGHQLVSENVTPSSLLDLSHYFVAQPTLLSVAFSRKPDLSTFKHTYAQTDCLLLLVYEQGPLACMRIFGGTGMRGDIHNSGLTADVIADKYLRLQQPDRAVNVLAALNWETYGAMCLITLHKIANYVFFGGDQRRPRIELMARALKTFAHTLSEETKDEFSDQVYDLKRRFCFYLLRKNLFAEAFEIAQDVADYDIFMDLYNLTKCISSLSEFAQVAFSQAAAIIHEEDRANGNLSLTCDLRSESACSLSTCSDMLRGQGAGTAPETGLGASQPQSQQVLKNYVPPLPSFKSKVFNAEMIKINIPKPELRPPLPKVSIAPPTSSLASLTLKSNSSLQQAPAKSLHPNGNLWSQDVPDQTVGLPMASSPLPRLPPSNIPDQSAQLGQFSTMPASPPPTGSYQPKFYQHPLVSGNIPAMLPSLTSEDYQKRLLQKKPTASILSNPANPAPTNGEAPATPAKSQTAEKNKVKFSDTIQVAVVPEIPRKEKPMPPKRNGYSRPAARHLTNPKKELADSLPLCHPNDEYLKDFNPITTNVTKPPIRRREEEPKSSSKGGNSSSSSSSIKVVHFGVV.

2 WD repeats span residues 304 to 343 and 345 to 384; these read PMGAQICSFAFSPDQEKLFLGSVDRNICLHDLVQQSTKYA and QIEIVPNQCAWHCDSAMLCVANERSVLQCFDLALATIGHQ. Composition is skewed to polar residues over residues 709 to 720, 757 to 771, and 818 to 828; these read TLKSNSSLQQAP, IPDQSAQLGQFSTMP, and SILSNPANPAP. 3 disordered regions span residues 709 to 776, 816 to 883, and 903 to 951; these read TLKS…SPPP, TASI…AARH, and EYLK…FGVV. A compositionally biased stretch (low complexity) spans 930–942; the sequence is SSKGGNSSSSSSS.

This sequence belongs to the WD repeat fritz family.

It is found in the cell membrane. The protein resides in the cytoplasm. Its subcellular location is the cytoskeleton. It localises to the cilium axoneme. In terms of biological role, probable effector of the planar cell polarity signaling pathway which regulates the septin cytoskeleton in both ciliogenesis and collective cell movements. Functions cell autonomously to regulate wing cell hair polarity and number. The protein is WD repeat-containing and planar cell polarity effector protein fritz (frtz) of Drosophila melanogaster (Fruit fly).